The primary structure comprises 359 residues: S-adenosylmethionine:tRNA ribosyltransferase-isomerase (359 aa).

It belongs to the QueA family. In terms of assembly, monomer.

It is found in the cytoplasm. It catalyses the reaction 7-aminomethyl-7-carbaguanosine(34) in tRNA + S-adenosyl-L-methionine = epoxyqueuosine(34) in tRNA + adenine + L-methionine + 2 H(+). It participates in tRNA modification; tRNA-queuosine biosynthesis. Its function is as follows. Transfers and isomerizes the ribose moiety from AdoMet to the 7-aminomethyl group of 7-deazaguanine (preQ1-tRNA) to give epoxyqueuosine (oQ-tRNA). In Colwellia psychrerythraea (strain 34H / ATCC BAA-681) (Vibrio psychroerythus), this protein is S-adenosylmethionine:tRNA ribosyltransferase-isomerase.